The following is a 692-amino-acid chain: Elongation factor G (692 aa).

In terms of domain architecture, tr-type G spans 8–282 (EKTRNIGIMA…AVLDYLPAPT (275 aa)). GTP-binding positions include 17-24 (AHIDAGKT), 81-85 (DTPGH), and 135-138 (NKMD).

The protein belongs to the TRAFAC class translation factor GTPase superfamily. Classic translation factor GTPase family. EF-G/EF-2 subfamily.

The protein resides in the cytoplasm. In terms of biological role, catalyzes the GTP-dependent ribosomal translocation step during translation elongation. During this step, the ribosome changes from the pre-translocational (PRE) to the post-translocational (POST) state as the newly formed A-site-bound peptidyl-tRNA and P-site-bound deacylated tRNA move to the P and E sites, respectively. Catalyzes the coordinated movement of the two tRNA molecules, the mRNA and conformational changes in the ribosome. This Bacillus licheniformis (strain ATCC 14580 / DSM 13 / JCM 2505 / CCUG 7422 / NBRC 12200 / NCIMB 9375 / NCTC 10341 / NRRL NRS-1264 / Gibson 46) protein is Elongation factor G.